A 361-amino-acid polypeptide reads, in one-letter code: Peptide chain release factor 1 (361 aa).

Gln-233 is subject to N5-methylglutamine. The span at 280–293 shows a compositional bias: basic and acidic residues; the sequence is ERRKKEQERADSRR. The tract at residues 280–307 is disordered; sequence ERRKKEQERADSRRGQVGSGDRSERIRT.

Belongs to the prokaryotic/mitochondrial release factor family. Methylated by PrmC. Methylation increases the termination efficiency of RF1.

The protein resides in the cytoplasm. In terms of biological role, peptide chain release factor 1 directs the termination of translation in response to the peptide chain termination codons UAG and UAA. This Rickettsia massiliae (strain Mtu5) protein is Peptide chain release factor 1.